A 454-amino-acid chain; its full sequence is 3-phosphoshikimate 1-carboxyvinyltransferase (454 aa).

The 3-phosphoshikimate site is built by lysine 39, serine 40, and arginine 44. Lysine 39 is a phosphoenolpyruvate binding site. Residues glycine 112 and arginine 140 each contribute to the phosphoenolpyruvate site. 3-phosphoshikimate-binding residues include serine 185, glutamine 187, aspartate 333, and lysine 360. Residue glutamine 187 participates in phosphoenolpyruvate binding. Aspartate 333 serves as the catalytic Proton acceptor. Arginine 364 and arginine 405 together coordinate phosphoenolpyruvate.

The protein belongs to the EPSP synthase family. Monomer.

It localises to the cytoplasm. It catalyses the reaction 3-phosphoshikimate + phosphoenolpyruvate = 5-O-(1-carboxyvinyl)-3-phosphoshikimate + phosphate. It functions in the pathway metabolic intermediate biosynthesis; chorismate biosynthesis; chorismate from D-erythrose 4-phosphate and phosphoenolpyruvate: step 6/7. Functionally, catalyzes the transfer of the enolpyruvyl moiety of phosphoenolpyruvate (PEP) to the 5-hydroxyl of shikimate-3-phosphate (S3P) to produce enolpyruvyl shikimate-3-phosphate and inorganic phosphate. The protein is 3-phosphoshikimate 1-carboxyvinyltransferase of Xylella fastidiosa (strain Temecula1 / ATCC 700964).